The following is a 246-amino-acid chain: tRNA pseudouridine synthase A (246 aa).

Asp-52 acts as the Nucleophile in catalysis. Tyr-111 is a binding site for substrate.

This sequence belongs to the tRNA pseudouridine synthase TruA family. Homodimer.

The catalysed reaction is uridine(38/39/40) in tRNA = pseudouridine(38/39/40) in tRNA. In terms of biological role, formation of pseudouridine at positions 38, 39 and 40 in the anticodon stem and loop of transfer RNAs. The protein is tRNA pseudouridine synthase A of Ehrlichia ruminantium (strain Gardel).